A 295-amino-acid polypeptide reads, in one-letter code: Pantothenate synthetase (295 aa).

Residue 30 to 37 (MGNLHDGH) coordinates ATP. Histidine 37 serves as the catalytic Proton donor. A (R)-pantoate-binding site is contributed by glutamine 61. Glutamine 61 is a binding site for beta-alanine. Position 149–152 (149–152 (GEKD)) interacts with ATP. (R)-pantoate is bound at residue glutamine 155. ATP-binding positions include valine 178 and 186–189 (MSSR).

This sequence belongs to the pantothenate synthetase family. As to quaternary structure, homodimer.

The protein resides in the cytoplasm. It carries out the reaction (R)-pantoate + beta-alanine + ATP = (R)-pantothenate + AMP + diphosphate + H(+). Its pathway is cofactor biosynthesis; (R)-pantothenate biosynthesis; (R)-pantothenate from (R)-pantoate and beta-alanine: step 1/1. Catalyzes the condensation of pantoate with beta-alanine in an ATP-dependent reaction via a pantoyl-adenylate intermediate. This is Pantothenate synthetase from Photobacterium profundum (strain SS9).